The primary structure comprises 674 residues: Death-associated protein kinase related (674 aa).

The Protein kinase domain maps to 37–295 (EVEQTPFARG…ATGCLDHIWL (259 aa)). ATP contacts are provided by residues 43–51 (FARGKFAAV) and K66. The active-site Proton acceptor is D160. Disordered stretches follow at residues 308–388 (QPQS…GGSI), 412–440 (TLTS…SDKE), 511–583 (DSSG…TSGS), and 614–650 (TSSA…HHHV). Positions 312–343 (DAEEEEEEDVDDDVEDEEEEEQVEEEEEETQN) are enriched in acidic residues. A compositionally biased stretch (low complexity) spans 352–363 (PQQQQQPVQQHQ). Basic residues predominate over residues 373 to 382 (KPTHNGHHRA). A phosphoserine mark is found at S384, S387, S435, S437, and S521. Residues 512 to 525 (SSGSAVARRSGGAV) show a composition bias toward low complexity. Composition is skewed to polar residues over residues 526 to 541 (TSSS…SVRL) and 555 to 564 (YKKQTSQNGC). 2 stretches are compositionally biased toward low complexity: residues 565–583 (SSTS…TSGS) and 614–631 (TSSA…TSAA). A compositionally biased stretch (basic residues) spans 632-650 (HHLHHHHMHHHHHHHHHHV).

This sequence belongs to the protein kinase superfamily. Ser/Thr protein kinase family.

It carries out the reaction L-seryl-[protein] + ATP = O-phospho-L-seryl-[protein] + ADP + H(+). The catalysed reaction is L-threonyl-[protein] + ATP = O-phospho-L-threonyl-[protein] + ADP + H(+). The chain is Death-associated protein kinase related (Drak) from Drosophila melanogaster (Fruit fly).